Here is a 538-residue protein sequence, read N- to C-terminus: MKTKFIFVTGGVVSSIGKGLASASLGALLEARGLRVSMQKLDPYINVDPGTMSPFQHGEVFVTDDGAETDLDLGHYERYTSARLSKRSNFTTGQVYFSVIEKERRGDYLGGTVQVIPHITDEIKHKILENAKGADVAIVEVGGTVGDIESLPFLEAIRQFKADRGAGNVLYLHVTLVPYIKTAGELKTKPTQHSVKELREIGIQPDILICRCEKDLPHDMKAKIALFCNVEEKGVITSADAEHIYAVPLALHKQGLDDQVVDKLNIWTKAPDLAPWESVVEKLRNPLKGEVHIAIVGKYVNLTESYKSLAEALTHGGIANDCRVYLRYLDSEKLESEGLGGLLDDVDAILVPGGFGERGTEGKIKAIEYARTRKVPFFGICLGMQMAVVEYARNVCGLDNAFSSEFRPDCANPVIHLMEEQKGVERKGGTMRLGAYPCSLSKGTFAHRAYGSLDVSERHRHRYEFNNAFREILVSKGLVISGIYKEGDLVEIVEVADHPWFLGCQFHPEFKSKPLNPHPLFRTFIAAALEHRGKRSQA.

The interval 1 to 266 is amidoligase domain; the sequence is MKTKFIFVTG…DDQVVDKLNI (266 aa). Residue Ser-14 coordinates CTP. Ser-14 is a binding site for UTP. Residues 15–20 and Asp-72 contribute to the ATP site; that span reads SIGKGL. Residues Asp-72 and Glu-140 each coordinate Mg(2+). CTP is bound by residues 147–149, 187–192, and Lys-223; these read DIE and KTKPTQ. UTP-binding positions include 187–192 and Lys-223; that span reads KTKPTQ. One can recognise a Glutamine amidotransferase type-1 domain in the interval 292-534; sequence HIAIVGKYVN…IAAALEHRGK (243 aa). Gly-354 contributes to the L-glutamine binding site. The active-site Nucleophile; for glutamine hydrolysis is Cys-381. Residues 382–385, Glu-405, and Arg-462 contribute to the L-glutamine site; that span reads LGMQ. Catalysis depends on residues His-507 and Glu-509.

The protein belongs to the CTP synthase family. Homotetramer.

It catalyses the reaction UTP + L-glutamine + ATP + H2O = CTP + L-glutamate + ADP + phosphate + 2 H(+). The enzyme catalyses L-glutamine + H2O = L-glutamate + NH4(+). The catalysed reaction is UTP + NH4(+) + ATP = CTP + ADP + phosphate + 2 H(+). It participates in pyrimidine metabolism; CTP biosynthesis via de novo pathway; CTP from UDP: step 2/2. Allosterically activated by GTP, when glutamine is the substrate; GTP has no effect on the reaction when ammonia is the substrate. The allosteric effector GTP functions by stabilizing the protein conformation that binds the tetrahedral intermediate(s) formed during glutamine hydrolysis. Inhibited by the product CTP, via allosteric rather than competitive inhibition. Functionally, catalyzes the ATP-dependent amination of UTP to CTP with either L-glutamine or ammonia as the source of nitrogen. Regulates intracellular CTP levels through interactions with the four ribonucleotide triphosphates. The sequence is that of CTP synthase from Geobacter metallireducens (strain ATCC 53774 / DSM 7210 / GS-15).